A 378-amino-acid chain; its full sequence is DNA primase small subunit PriS (378 aa).

Residues Asp98, Asp100, and Asp282 contribute to the active site.

It belongs to the eukaryotic-type primase small subunit family. Heterodimer of a small subunit (PriS) and a large subunit (PriL). Mg(2+) serves as cofactor. It depends on Mn(2+) as a cofactor.

Catalytic subunit of DNA primase, an RNA polymerase that catalyzes the synthesis of short RNA molecules used as primers for DNA polymerase during DNA replication. The small subunit contains the primase catalytic core and has DNA synthesis activity on its own. Binding to the large subunit stabilizes and modulates the activity, increasing the rate of DNA synthesis while decreasing the length of the DNA fragments, and conferring RNA synthesis capability. The DNA polymerase activity may enable DNA primase to also catalyze primer extension after primer synthesis. May also play a role in DNA repair. The chain is DNA primase small subunit PriS from Methanosphaerula palustris (strain ATCC BAA-1556 / DSM 19958 / E1-9c).